A 391-amino-acid polypeptide reads, in one-letter code: tRNA-specific 2-thiouridylase MnmA (391 aa).

ATP is bound by residues 35-42 (GLSGGVDS) and Leu-61. Catalysis depends on Cys-122, which acts as the Nucleophile. An intrachain disulfide couples Cys-122 to Cys-221. Gly-147 provides a ligand contact to ATP. The tract at residues 171 to 173 (KDQ) is interaction with tRNA. The active-site Cysteine persulfide intermediate is Cys-221. The interval 328–329 (RY) is interaction with tRNA.

It belongs to the MnmA/TRMU family.

It is found in the cytoplasm. The catalysed reaction is S-sulfanyl-L-cysteinyl-[protein] + uridine(34) in tRNA + AH2 + ATP = 2-thiouridine(34) in tRNA + L-cysteinyl-[protein] + A + AMP + diphosphate + H(+). Functionally, catalyzes the 2-thiolation of uridine at the wobble position (U34) of tRNA, leading to the formation of s(2)U34. The polypeptide is tRNA-specific 2-thiouridylase MnmA (Synechococcus sp. (strain CC9311)).